The following is a 191-amino-acid chain: Putative 3-methyladenine DNA glycosylase (191 aa).

This sequence belongs to the DNA glycosylase MPG family.

This chain is Putative 3-methyladenine DNA glycosylase, found in Carboxydothermus hydrogenoformans (strain ATCC BAA-161 / DSM 6008 / Z-2901).